A 346-amino-acid polypeptide reads, in one-letter code: MKQIINPLKRNSNKIPIWFMRQAGRYLPEYKKVREKTKNFLDFCYDVNKATEVTLQPIKRYGFDAAIIFSDILVLPHALGWEVDFKENIGPILKQFKSQEDFKYLQSNPNNKLEKVYEIIKKVKEELPSTTSLIGFAGSPWTVMSYMLEGKGKQDFKTSKKFIYENKILAKELLNFITEKTADHLVNQAKSGADVLKLFDSWSGVLGEEEFTEFVIEPTKKIILKVKEDFPKIPIIAFPKGAVLLYEKFIKEVPIDILAVDQMVPLEKMKEWSDKVIVQGNLDPVVLLTNKEIIKEKAYKILQTMKGKNFIFNLGHGILPETPPENVKFLTEYVRLYEEKNSNSTF.

Substrate contacts are provided by residues 21–25 (RQAGR), Phe40, Asp71, Tyr146, Ser201, and His316.

Belongs to the uroporphyrinogen decarboxylase family. Homodimer.

The protein resides in the cytoplasm. The enzyme catalyses uroporphyrinogen III + 4 H(+) = coproporphyrinogen III + 4 CO2. Its pathway is porphyrin-containing compound metabolism; protoporphyrin-IX biosynthesis; coproporphyrinogen-III from 5-aminolevulinate: step 4/4. Functionally, catalyzes the decarboxylation of four acetate groups of uroporphyrinogen-III to yield coproporphyrinogen-III. This chain is Uroporphyrinogen decarboxylase, found in Rickettsia felis (strain ATCC VR-1525 / URRWXCal2) (Rickettsia azadi).